Consider the following 275-residue polypeptide: Mitochondrial prohibitin complex protein 1 (275 aa).

A coiled-coil region spans residues 180–213; the sequence is REFTEAVEMKQVAQQEAEKARYLVEKAEQMKIAA.

This sequence belongs to the prohibitin family. In terms of assembly, high molecular weight complex that consist of phb-1 and phb-2.

The protein resides in the mitochondrion inner membrane. In terms of biological role, PHB proteins are essential during embryonic development and are required for somatic and germline differentiation in the larval gonad. A deficiency in PHB proteins results in altered mitochondrial biogenesis in body wall muscle cells. The sequence is that of Mitochondrial prohibitin complex protein 1 (phb-1) from Caenorhabditis elegans.